Here is a 536-residue protein sequence, read N- to C-terminus: Subtilisin-like proteinase Spm1 (536 aa).

Positions 1–15 are cleaved as a signal peptide; that stretch reads MKSVILLSLAACAVA. The propeptide occupies 16–147; that stretch reads APTAGVETIH…RYEEVKKDEC (132 aa). Positions 44 to 137 constitute an Inhibitor I9 domain; the sequence is YIIKFKKHVD…IERDTIVHTM (94 aa). Positions 156 to 462 constitute a Peptidase S8 domain; that stretch reads PWGLSRVSHR…GGCSNYFEIV (307 aa). Residues Asp192 and His224 each act as charge relay system in the active site. N-linked (GlcNAc...) asparagine glycans are attached at residues Asn254 and Asn294. Ser390 (charge relay system) is an active-site residue.

This sequence belongs to the peptidase S8 family.

The protein resides in the vacuole. This chain is Subtilisin-like proteinase Spm1 (SPM1), found in Pyricularia oryzae (strain 70-15 / ATCC MYA-4617 / FGSC 8958) (Rice blast fungus).